We begin with the raw amino-acid sequence, 101 residues long: NADH-quinone oxidoreductase subunit K (101 aa).

3 consecutive transmembrane segments (helical) span residues 4–24 (LSHYLVLGALLFAIGVVGIFL), 30–50 (IILLMSIELMLLAVNMNFVAF), and 61–81 (IFVFFILTVAAAEAAIGLAIL).

It belongs to the complex I subunit 4L family. As to quaternary structure, NDH-1 is composed of 14 different subunits. Subunits NuoA, H, J, K, L, M, N constitute the membrane sector of the complex.

It is found in the cell inner membrane. It carries out the reaction a quinone + NADH + 5 H(+)(in) = a quinol + NAD(+) + 4 H(+)(out). In terms of biological role, NDH-1 shuttles electrons from NADH, via FMN and iron-sulfur (Fe-S) centers, to quinones in the respiratory chain. The immediate electron acceptor for the enzyme in this species is believed to be ubiquinone. Couples the redox reaction to proton translocation (for every two electrons transferred, four hydrogen ions are translocated across the cytoplasmic membrane), and thus conserves the redox energy in a proton gradient. The chain is NADH-quinone oxidoreductase subunit K from Nitrosomonas europaea (strain ATCC 19718 / CIP 103999 / KCTC 2705 / NBRC 14298).